Here is a 372-residue protein sequence, read N- to C-terminus: NAD(P)H-quinone oxidoreductase subunit 1 (372 aa).

The next 8 membrane-spanning stretches (helical) occupy residues 28-48 (IWLPLPLLLMIIGATVGVLVV), 97-117 (WLFTLGPALVVIPVFLSYLIV), 130-150 (VGIFLWISLSSIAPIGLLMSG), 176-196 (LALAVLAIAMMSNSLSTIDIV), 204-224 (ILGWNIWRQPVGFLIFWIAAL), 265-285 (LVLSALIVSILYLGGWEFPIP), 308-328 (SLGIIMTLVKTYALVFIAVLL), and 351-371 (VALVNLLLTAALKLAFPIAFG).

This sequence belongs to the complex I subunit 1 family. As to quaternary structure, NDH-1 is composed of at least 11 different subunits.

It localises to the cellular thylakoid membrane. The enzyme catalyses a plastoquinone + NADH + (n+1) H(+)(in) = a plastoquinol + NAD(+) + n H(+)(out). It carries out the reaction a plastoquinone + NADPH + (n+1) H(+)(in) = a plastoquinol + NADP(+) + n H(+)(out). Functionally, NDH-1 shuttles electrons from an unknown electron donor, via FMN and iron-sulfur (Fe-S) centers, to quinones in the respiratory and/or the photosynthetic chain. The immediate electron acceptor for the enzyme in this species is believed to be plastoquinone. Couples the redox reaction to proton translocation, and thus conserves the redox energy in a proton gradient. The polypeptide is NAD(P)H-quinone oxidoreductase subunit 1 (Picosynechococcus sp. (strain ATCC 27264 / PCC 7002 / PR-6) (Agmenellum quadruplicatum)).